The chain runs to 379 residues: Succinyl-diaminopimelate desuccinylase (379 aa).

Zn(2+) is bound at residue histidine 68. Aspartate 70 is a catalytic residue. Residue aspartate 101 participates in Zn(2+) binding. Catalysis depends on glutamate 135, which acts as the Proton acceptor. Glutamate 136, glutamate 164, and histidine 350 together coordinate Zn(2+).

It belongs to the peptidase M20A family. DapE subfamily. As to quaternary structure, homodimer. It depends on Zn(2+) as a cofactor. Co(2+) is required as a cofactor.

It catalyses the reaction N-succinyl-(2S,6S)-2,6-diaminopimelate + H2O = (2S,6S)-2,6-diaminopimelate + succinate. It functions in the pathway amino-acid biosynthesis; L-lysine biosynthesis via DAP pathway; LL-2,6-diaminopimelate from (S)-tetrahydrodipicolinate (succinylase route): step 3/3. In terms of biological role, catalyzes the hydrolysis of N-succinyl-L,L-diaminopimelic acid (SDAP), forming succinate and LL-2,6-diaminopimelate (DAP), an intermediate involved in the bacterial biosynthesis of lysine and meso-diaminopimelic acid, an essential component of bacterial cell walls. The sequence is that of Succinyl-diaminopimelate desuccinylase from Bordetella bronchiseptica (strain ATCC BAA-588 / NCTC 13252 / RB50) (Alcaligenes bronchisepticus).